Reading from the N-terminus, the 598-residue chain is Aspartate--tRNA ligase (598 aa).

Position 175 (Glu175) interacts with L-aspartate. Residues 199–202 (QLFK) are aspartate. Arg221 provides a ligand contact to L-aspartate. Residues 221–223 (RDE) and Gln230 contribute to the ATP site. Position 450 (His450) interacts with L-aspartate. Glu486 contributes to the ATP binding site. Residue Arg493 coordinates L-aspartate. ATP is bound at residue 538–541 (GLDR).

It belongs to the class-II aminoacyl-tRNA synthetase family. Type 1 subfamily. In terms of assembly, homodimer.

The protein resides in the cytoplasm. It catalyses the reaction tRNA(Asp) + L-aspartate + ATP = L-aspartyl-tRNA(Asp) + AMP + diphosphate. In terms of biological role, catalyzes the attachment of L-aspartate to tRNA(Asp) in a two-step reaction: L-aspartate is first activated by ATP to form Asp-AMP and then transferred to the acceptor end of tRNA(Asp). In Lactiplantibacillus plantarum (strain ATCC BAA-793 / NCIMB 8826 / WCFS1) (Lactobacillus plantarum), this protein is Aspartate--tRNA ligase.